The following is a 108-amino-acid chain: Transcription factor S (108 aa).

8 residues coordinate Zn(2+): Cys-5, Cys-8, Cys-21, Cys-24, Cys-69, Cys-72, Cys-97, and Cys-100. The segment at 5–24 (CPKCNNLMLPKDGKLKCAVC) adopts a C4-type zinc-finger fold. The TFIIS-type zinc finger occupies 65–105 (TRIECPKCGHNEAYWWLQQTRCADEPETRFYKCKKCGHTWR).

Belongs to the archaeal RpoM/eukaryotic RPA12/RPB9/RPC11 RNA polymerase family.

In terms of biological role, induces RNA cleavage activity in the RNA polymerase. In its presence, the cleavage activity of the RNA polymerase truncates the RNA back to position +15 in a stepwise manner by releasing mainly dinucleotides from the 3'-end of the nascent RNA. The truncated RNAs are able to continue elongation. Involved in transcriptional proofreading and fidelity. Misincorporation of nucleotides during elongation of transcription leads to arrested elongation complexes which are rescued by TFS-promoted removal of a dinucleotide from the 3'-end. TFS is able to induce a cleavage resynthesis cycle in stalled elongation complexes (resulting from the next missing nucleotide or a reduced incorporation rate of a wrong nucleotide) preventing misincorporation and enabling proofreading in a post-incorporation manner. Pausing of elongation complexes is the main determinant of TFS-induced RNA cleavage. This Methanocaldococcus jannaschii (strain ATCC 43067 / DSM 2661 / JAL-1 / JCM 10045 / NBRC 100440) (Methanococcus jannaschii) protein is Transcription factor S.